The primary structure comprises 185 residues: Large ribosomal subunit protein uL5 (185 aa).

Belongs to the universal ribosomal protein uL5 family. In terms of assembly, part of the 50S ribosomal subunit; part of the 5S rRNA/L5/L18/L25 subcomplex. Contacts the 5S rRNA and the P site tRNA. Forms a bridge to the 30S subunit in the 70S ribosome.

This is one of the proteins that bind and probably mediate the attachment of the 5S RNA into the large ribosomal subunit, where it forms part of the central protuberance. In the 70S ribosome it contacts protein S13 of the 30S subunit (bridge B1b), connecting the 2 subunits; this bridge is implicated in subunit movement. Contacts the P site tRNA; the 5S rRNA and some of its associated proteins might help stabilize positioning of ribosome-bound tRNAs. This chain is Large ribosomal subunit protein uL5, found in Rhodopseudomonas palustris (strain HaA2).